The chain runs to 387 residues: Chaperone protein DnaJ (387 aa).

One can recognise a J domain in the interval 5–70; sequence DYYEILEVSA…QKRQAYDQFG (66 aa). The CR-type zinc finger occupies 130–208; the sequence is GTTVDVRIPT…CRGEGYKHSS (79 aa). 8 residues coordinate Zn(2+): Cys-143, Cys-146, Cys-160, Cys-163, Cys-182, Cys-185, Cys-196, and Cys-199. CXXCXGXG motif repeat units follow at residues 143–150, 160–167, 182–189, and 196–203; these read CESCDGSG, CPTCQGIG, CPNCHGTG, and CKTCRGEG.

Belongs to the DnaJ family. As to quaternary structure, homodimer. Zn(2+) is required as a cofactor.

Its subcellular location is the cytoplasm. Participates actively in the response to hyperosmotic and heat shock by preventing the aggregation of stress-denatured proteins and by disaggregating proteins, also in an autonomous, DnaK-independent fashion. Unfolded proteins bind initially to DnaJ; upon interaction with the DnaJ-bound protein, DnaK hydrolyzes its bound ATP, resulting in the formation of a stable complex. GrpE releases ADP from DnaK; ATP binding to DnaK triggers the release of the substrate protein, thus completing the reaction cycle. Several rounds of ATP-dependent interactions between DnaJ, DnaK and GrpE are required for fully efficient folding. Also involved, together with DnaK and GrpE, in the DNA replication of plasmids through activation of initiation proteins. This is Chaperone protein DnaJ from Hydrogenovibrio crunogenus (strain DSM 25203 / XCL-2) (Thiomicrospira crunogena).